Here is a 175-residue protein sequence, read N- to C-terminus: Crossover junction endodeoxyribonuclease RuvC (175 aa).

Catalysis depends on residues aspartate 16, glutamate 76, and aspartate 148. Positions 16, 76, and 148 each coordinate Mg(2+).

This sequence belongs to the RuvC family. As to quaternary structure, homodimer which binds Holliday junction (HJ) DNA. The HJ becomes 2-fold symmetrical on binding to RuvC with unstacked arms; it has a different conformation from HJ DNA in complex with RuvA. In the full resolvosome a probable DNA-RuvA(4)-RuvB(12)-RuvC(2) complex forms which resolves the HJ. The cofactor is Mg(2+).

Its subcellular location is the cytoplasm. The catalysed reaction is Endonucleolytic cleavage at a junction such as a reciprocal single-stranded crossover between two homologous DNA duplexes (Holliday junction).. Functionally, the RuvA-RuvB-RuvC complex processes Holliday junction (HJ) DNA during genetic recombination and DNA repair. Endonuclease that resolves HJ intermediates. Cleaves cruciform DNA by making single-stranded nicks across the HJ at symmetrical positions within the homologous arms, yielding a 5'-phosphate and a 3'-hydroxyl group; requires a central core of homology in the junction. The consensus cleavage sequence is 5'-(A/T)TT(C/G)-3'. Cleavage occurs on the 3'-side of the TT dinucleotide at the point of strand exchange. HJ branch migration catalyzed by RuvA-RuvB allows RuvC to scan DNA until it finds its consensus sequence, where it cleaves and resolves the cruciform DNA. The polypeptide is Crossover junction endodeoxyribonuclease RuvC (Rhodopseudomonas palustris (strain BisB18)).